A 315-amino-acid chain; its full sequence is 10-epi-cubebol synthase (315 aa).

Residues D79, N220, S224, and E228 each coordinate Mg(2+). The DDXXD motif motif lies at 79-83 (DDVCE). Residues 220 to 228 (NDIYSLRKE) carry the NXXXSXXXE motif motif.

It belongs to the terpene synthase family. Mg(2+) is required as a cofactor.

The enzyme catalyses (2E,6E)-farnesyl diphosphate + H2O = 10-epi-cubebol + diphosphate. Catalyzes the cyclization of farnesyl diphosphate (FPP) to 10-epi-cubebol. Is also responsible for the formation of many other sesquiterpenes, mainly cadalanes and cubebanes, including 1,10-di-epi-cubebol and the cadalanes delta-cadinene, T-cadinol and alpha-cadinol. The polypeptide is 10-epi-cubebol synthase (Sorangium cellulosum (strain So ce56) (Polyangium cellulosum (strain So ce56))).